The chain runs to 169 residues: Ribosome maturation factor RimP (169 aa).

This sequence belongs to the RimP family.

The protein localises to the cytoplasm. Functionally, required for maturation of 30S ribosomal subunits. In Pseudomonas putida (strain W619), this protein is Ribosome maturation factor RimP.